The primary structure comprises 505 residues: Glutamyl-tRNA(Gln) amidotransferase subunit A, mitochondrial (505 aa).

Catalysis depends on charge relay system residues Lys-76 and Ser-158. Residue Ser-182 is the Acyl-ester intermediate of the active site.

Belongs to the amidase family. GatA subfamily. Subunit of the heterotrimeric GatCAB amidotransferase (AdT) complex, composed of A, B and C subunits.

Its subcellular location is the mitochondrion. The catalysed reaction is L-glutamyl-tRNA(Gln) + L-glutamine + ATP + H2O = L-glutaminyl-tRNA(Gln) + L-glutamate + ADP + phosphate + H(+). Functionally, allows the formation of correctly charged Gln-tRNA(Gln) through the transamidation of misacylated Glu-tRNA(Gln) in the mitochondria. The reaction takes place in the presence of glutamine and ATP through an activated gamma-phospho-Glu-tRNA(Gln). In Ixodes scapularis (Black-legged tick), this protein is Glutamyl-tRNA(Gln) amidotransferase subunit A, mitochondrial.